A 48-amino-acid chain; its full sequence is Phospholipase A2 TI-Nh (48 aa).

His-25 is an active-site residue. Asp-26 is a Ca(2+) binding site.

It belongs to the phospholipase A2 family. Group I subfamily. D49 sub-subfamily. As to quaternary structure, monomer. Requires Ca(2+) as cofactor. Expressed by the venom gland.

Its subcellular location is the secreted. It carries out the reaction a 1,2-diacyl-sn-glycero-3-phosphocholine + H2O = a 1-acyl-sn-glycero-3-phosphocholine + a fatty acid + H(+). In terms of biological role, phospholipase A2 with weak enzymatic activity, which partially inhibits thrombin enzymatic activity (Ki=73 nM), completely inhibits thrombin-induced platelet aggregation and retards fibrin clot formation (IC(50)=0.2 nM). May exert this anticoagulant effect through a non-enzymatic mechanism. This is Phospholipase A2 TI-Nh from Naja haje haje (Egyptian cobra).